The sequence spans 259 residues: Indole-diterpene biosynthesis cluster protein S (259 aa).

5 consecutive transmembrane segments (helical) span residues 5 to 25, 64 to 84, 87 to 107, 134 to 154, and 221 to 241; these read EASG…GMVW, WFAL…AIIL, VYLI…LWVL, VLWF…AASF, and LGAG…PAAG.

This sequence belongs to the ltmS family.

The protein localises to the membrane. Part of the gene cluster that mediates the biosynthesis of paspalitrems, indole-diterpene (IDT) mycotoxins that are potent tremorgens in mammals. The geranylgeranyl diphosphate (GGPP) synthase idtG is proposed to catalyze the first step in IDT biosynthesis via catalysis of a series of iterative condensations of isopentenyl diphosphate (IPP) with dimethylallyl diphosphate (DMAPP), geranyl diphosphate (GPP), and farnesyl diphosphate (FPP), to form GGPP. Condensation of indole-3-glycerol phosphate with GGPP by the prenyltransferase idtC then forms 3-geranylgeranylindole (3-GGI). Epoxidation of the two terminal alkenes of the geranylgeranyl moiety by the FAD-dependent monooxygenase idtM, and cyclization by the terpene cyclase idtB then leads to the production of paspaline. The cytochrome P450 monooxygenase idtP then catalyzes oxidative elimination of the pendant methyl group at C-12 of paspaline and generates the C-10 ketone to yield 13-desoxypaxilline. The cytochrome P450 monooxygenase idtQ may catalyze the C-13 oxidation of 13-desoxypaxilline to afford paxilline. Considering that both paspalicine and paxilline were detected in C.paspali, idtQ also catalyzes the formation of paspalinine from 13-desoxypaxilline via paspalicine as an intermediate. Finally, the alpha-prenyltransferase idtF prenylates paspalinine at the C-20 or the C-21 positions to yield paspalitrems A and C, respectively. The hydroxylation of paspalitrem A at C-32 by a still unknown oxidase affords paspalitrem B. The chain is Indole-diterpene biosynthesis cluster protein S from Claviceps paspali (Rye ergot fungus).